The primary structure comprises 151 residues: Ubiquitin-conjugating enzyme E2 2 (151 aa).

Positions 1–26 are disordered; the sequence is MSTTARRRLMRDFKRMQQDPPQGVSA. In terms of domain architecture, UBC core spans 4-150; sequence TARRRLMRDF…VRDTVEASWT (147 aa). The active-site Glycyl thioester intermediate is cysteine 88.

The protein belongs to the ubiquitin-conjugating enzyme family.

The protein localises to the cytoplasm. The protein resides in the nucleus. The catalysed reaction is S-ubiquitinyl-[E1 ubiquitin-activating enzyme]-L-cysteine + [E2 ubiquitin-conjugating enzyme]-L-cysteine = [E1 ubiquitin-activating enzyme]-L-cysteine + S-ubiquitinyl-[E2 ubiquitin-conjugating enzyme]-L-cysteine.. It functions in the pathway protein modification; protein ubiquitination. Functionally, catalyzes the covalent attachment of ubiquitin to other proteins. Plays a role in transcription regulation by catalyzing the monoubiquitination of histone H2B to form H2BK123ub1. H2BK123ub1 gives a specific tag for epigenetic transcriptional activation and is also a prerequisite for H3K4me and H3K79me formation. Also involved in postreplication repair of UV-damaged DNA, in N-end rule-dependent protein degradation and in sporulation. This is Ubiquitin-conjugating enzyme E2 2 (UBC2) from Yarrowia lipolytica (strain CLIB 122 / E 150) (Yeast).